The sequence spans 1711 residues: Reverse gyrase (1711 aa).

The segment at Met1 to Ser39 adopts an RG N-terminal-type zinc-finger fold. Cys9, Cys12, Cys27, and Cys30 together coordinate Zn(2+). Residues Gln89 and Ala106 to Ser113 each bind ATP. In terms of domain architecture, Helicase ATP-binding spans Val93–Leu256. The DEAD box motif lies at Asp213 to Asp216. Residues Asp638–Gly1711 form a topoisomerase I region. In terms of domain architecture, Toprim spans Ser642 to Val805. Mg(2+) is bound at residue Glu648. The RG C-terminal-type zinc finger occupies Leu722–Asp751. Zn(2+) is bound by residues Cys725, Cys728, Cys741, and Cys744. Residue Asp774 participates in Mg(2+) binding. Residues Asn821 to Val1709 enclose the Topo IA-type catalytic domain. The DOD-type homing endonuclease domain maps to Val1160–Ile1287. The active-site O-(5'-phospho-DNA)-tyrosine intermediate is Tyr1452.

The protein in the N-terminal section; belongs to the DEAD box helicase family. DDVD subfamily. In the C-terminal section; belongs to the type IA topoisomerase family. Monomer. Zn(2+) is required as a cofactor. Requires Mg(2+) as cofactor. Post-translationally, this protein undergoes a protein self splicing that involves a post-translational excision of the intervening region (intein) followed by peptide ligation.

It localises to the cytoplasm. It catalyses the reaction ATP + H2O = ADP + phosphate + H(+). Functionally, modifies the topological state of DNA by introducing positive supercoils in an ATP-dependent process, increasing the linking number in steps of +1. Binds to single-stranded DNA, transiently cleaves and then rejoins the ends, introducing a positive supercoil in the process. The scissile phosphodiester is attacked by the catalytic tyrosine of the enzyme, resulting in the formation of a DNA-(5'-phosphotyrosyl)-enzyme intermediate. Probably involved in rewinding DNA strands in regions of the chromosome that have opened up to allow replication, transcription, DNA repair and/or for DNA protection. In Thermococcus kodakarensis (strain ATCC BAA-918 / JCM 12380 / KOD1) (Pyrococcus kodakaraensis (strain KOD1)), this protein is Reverse gyrase.